Consider the following 358-residue polypeptide: Mitogen-activated protein kinase hog-1 (358 aa).

Residues 20-299 (YSDLQPVGMG…ATEALSHEYL (280 aa)) form the Protein kinase domain. Residues 26-34 (VGMGAFGLV) and K49 contribute to the ATP site. Residue D141 is the Proton acceptor of the active site. Position 171 is a phosphothreonine (T171). The TXY signature appears at 171–173 (TGY). Y173 is modified (phosphotyrosine).

The protein belongs to the protein kinase superfamily. Ser/Thr protein kinase family. MAP kinase subfamily. HOG1 sub-subfamily. It depends on Mg(2+) as a cofactor. Dually phosphorylated on Thr-171 and Tyr-173, which activates the enzyme. Phosphorylation is induced by fungicides and osmotic stress.

The protein resides in the cytoplasm. It is found in the nucleus. The enzyme catalyses L-seryl-[protein] + ATP = O-phospho-L-seryl-[protein] + ADP + H(+). It catalyses the reaction L-threonyl-[protein] + ATP = O-phospho-L-threonyl-[protein] + ADP + H(+). With respect to regulation, activated by tyrosine and threonine phosphorylation. Functionally, proline-directed serine/threonine-protein kinase involved in a signal transduction pathway that is activated by changes in the osmolarity of the extracellular environment. Controls osmotic regulation of transcription of target genes. Involved in ion flux-mediated turgor regulation. In Neurospora crassa (strain ATCC 24698 / 74-OR23-1A / CBS 708.71 / DSM 1257 / FGSC 987), this protein is Mitogen-activated protein kinase hog-1 (hog-1).